We begin with the raw amino-acid sequence, 484 residues long: tRNA sulfurtransferase (484 aa).

Positions 63–167 constitute a THUMP domain; it reads REMIERLTCT…DQRLYVIHNQ (105 aa). Residues 185–186, lysine 267, glycine 289, and glutamine 298 contribute to the ATP site; that span reads LM. Cysteine 346 and cysteine 457 are disulfide-bonded. One can recognise a Rhodanese domain in the interval 405–483; the sequence is ALPGQIVIDI…GHANVRVYRP (79 aa). The Cysteine persulfide intermediate role is filled by cysteine 457.

This sequence belongs to the ThiI family.

It is found in the cytoplasm. The catalysed reaction is [ThiI sulfur-carrier protein]-S-sulfanyl-L-cysteine + a uridine in tRNA + 2 reduced [2Fe-2S]-[ferredoxin] + ATP + H(+) = [ThiI sulfur-carrier protein]-L-cysteine + a 4-thiouridine in tRNA + 2 oxidized [2Fe-2S]-[ferredoxin] + AMP + diphosphate. It carries out the reaction [ThiS sulfur-carrier protein]-C-terminal Gly-Gly-AMP + S-sulfanyl-L-cysteinyl-[cysteine desulfurase] + AH2 = [ThiS sulfur-carrier protein]-C-terminal-Gly-aminoethanethioate + L-cysteinyl-[cysteine desulfurase] + A + AMP + 2 H(+). The protein operates within cofactor biosynthesis; thiamine diphosphate biosynthesis. Catalyzes the ATP-dependent transfer of a sulfur to tRNA to produce 4-thiouridine in position 8 of tRNAs, which functions as a near-UV photosensor. Also catalyzes the transfer of sulfur to the sulfur carrier protein ThiS, forming ThiS-thiocarboxylate. This is a step in the synthesis of thiazole, in the thiamine biosynthesis pathway. The sulfur is donated as persulfide by IscS. The sequence is that of tRNA sulfurtransferase from Pseudomonas putida (strain ATCC 47054 / DSM 6125 / CFBP 8728 / NCIMB 11950 / KT2440).